A 326-amino-acid polypeptide reads, in one-letter code: Glycine N(alpha)-acyltransferase (326 aa).

It belongs to the acetyltransferase family.

It catalyses the reaction a (3R)-hydroxyacyl-[ACP] + glycine = a lyso-glycine lipid + holo-[ACP] + H(+). It carries out the reaction (3R)-hydroxyhexadecanoyl-[ACP] + glycine = N-[(3R)-3-hydroxyhexadecanoyl]-glycine + holo-[ACP] + H(+). It participates in lipid metabolism. In terms of biological role, is involved in the production of glycine lipids (GL), which are phosphorus-free membrane lipids. Catalyzes the first step of GL biosynthesis, i.e. the N-acylation of glycine via addition of a 3-hydroxy fatty acyl group, to form a range of monoacylated glycine (also named lyso-glycine lipids or lyso-GL). As an example, catalyzes the production of commendamide, an N-acylated (3-OH C16:0) derivative of glycine with hemolytic activity and the ability to solubilize cholesterol micelles; this compound can also activate NF-kB through the G-protein coupled receptor GPCR G2A/132. This is Glycine N(alpha)-acyltransferase from Phocaeicola vulgatus (strain ATCC 8482 / DSM 1447 / JCM 5826 / CCUG 4940 / NBRC 14291 / NCTC 11154) (Bacteroides vulgatus).